A 421-amino-acid polypeptide reads, in one-letter code: Serine--tRNA ligase (421 aa).

225-227 (TAE) contributes to the L-serine binding site. ATP contacts are provided by residues 256-258 (RSE) and V272. Position 279 (E279) interacts with L-serine. 345–348 (ETHS) contributes to the ATP binding site. T380 serves as a coordination point for L-serine.

The protein belongs to the class-II aminoacyl-tRNA synthetase family. Type-1 seryl-tRNA synthetase subfamily. As to quaternary structure, homodimer. The tRNA molecule binds across the dimer.

Its subcellular location is the cytoplasm. It carries out the reaction tRNA(Ser) + L-serine + ATP = L-seryl-tRNA(Ser) + AMP + diphosphate + H(+). The enzyme catalyses tRNA(Sec) + L-serine + ATP = L-seryl-tRNA(Sec) + AMP + diphosphate + H(+). Its pathway is aminoacyl-tRNA biosynthesis; selenocysteinyl-tRNA(Sec) biosynthesis; L-seryl-tRNA(Sec) from L-serine and tRNA(Sec): step 1/1. Its function is as follows. Catalyzes the attachment of serine to tRNA(Ser). Is also able to aminoacylate tRNA(Sec) with serine, to form the misacylated tRNA L-seryl-tRNA(Sec), which will be further converted into selenocysteinyl-tRNA(Sec). In Thermus thermophilus (strain ATCC 27634 / DSM 579 / HB8), this protein is Serine--tRNA ligase.